Here is a 249-residue protein sequence, read N- to C-terminus: uncharacterized protein (249 aa).

The protein localises to the cytoplasm. Its subcellular location is the nucleus. This is an uncharacterized protein from Schizosaccharomyces pombe (strain 972 / ATCC 24843) (Fission yeast).